A 346-amino-acid chain; its full sequence is Dimethyladenosine transferase 1, mitochondrial (346 aa).

Residues 1–27 (MATQGVLAKYRLPPLPTIGEIIKLFNL) constitute a mitochondrion transit peptide. S-adenosyl-L-methionine-binding residues include Asn36, Leu38, Gly63, Glu85, Lys86, Asp111, Ile112, and Asn141.

The protein belongs to the class I-like SAM-binding methyltransferase superfamily. rRNA adenine N(6)-methyltransferase family. KsgA subfamily.

The protein localises to the mitochondrion. The catalysed reaction is adenosine(N)/adenosine(N+1) in rRNA + 4 S-adenosyl-L-methionine = N(6)-dimethyladenosine(N)/N(6)-dimethyladenosine(N+1) in rRNA + 4 S-adenosyl-L-homocysteine + 4 H(+). Functionally, mitochondrial methyltransferase which uses S-adenosyl methionine to dimethylate two highly conserved adjacent adenosine residues (A1583 and A1584) within the loop of helix 45 at the 3-prime end of 12S rRNA, thereby regulating the assembly or stability of the small subunit of the mitochondrial ribosome. Also required for basal transcription of mitochondrial DNA, probably via its interaction with POLRMT and TFAM. Stimulates transcription independently of the methyltransferase activity. The chain is Dimethyladenosine transferase 1, mitochondrial (tfb1m) from Xenopus tropicalis (Western clawed frog).